The following is a 619-amino-acid chain: Adagio protein 3 (619 aa).

Positions 44 to 123 (VGMFYYPMTP…SEIRRCLEEG (80 aa)) constitute a PAS domain. Cys91 carries the S-4a-FMN cysteine modification. Residues 127–168 (QGELLNFRKDGTPLVNRLRLAPIRDDDGTITHVIGIQVFSET) form the PAC domain. Positions 211–257 (ILQLSDEVLAHNILSRLTPRDVASIGSACRRLRQLTKNESVRKMVCQ) constitute an F-box domain. Kelch repeat units lie at residues 304 to 354 (SRCN…TSSP), 357 to 404 (RWGH…AGGT), 409 to 457 (RSWH…PTSW), 462 to 513 (RLGH…ECSA), and 523 to 571 (RLDH…NVPG).

It belongs to the ADAGIO family. In terms of assembly, interacts with ADO1 (via Kelch repeats), ADO2 (via Kelch repeats), SKP1A/ASK1, SKP1B/ASK2, ASK3, SKP1K/ASK11, ASK12, ASK13 and SKP1N/ASK14. Interacts (via Kelch repeats) with CDF1, CDF2 and CDF3. Interacts (via N-terminus) with CO and GI (via N-terminus) in a blue-light-dependent manner. Post-translationally, FMN binds covalently to cysteine after exposure to blue light and is reversed in the dark. As to expression, highly expressed in stomata and leaves and to a lower extent in seeds, roots, rosettes, stems and siliques. Also present in sepals and anther filaments.

The protein localises to the nucleus. The protein resides in the cytoplasm. It functions in the pathway protein modification; protein ubiquitination. In terms of biological role, component of an E3 ubiquitin ligase complex that plays a central role in blue light-dependent circadian cycles. Acts as a blue light photoreceptor, due to the presence of FMN, that mediates light-regulated protein degradation of critical clock components by targeting them to the proteasome complex. The SCF(ADO3) E3 ubiquitin ligase complex is involved in the regulation of circadian clock-dependent processes including transition to flowering time, hypocotyl elongation, cotyledons and leaf movement rhythms. Forms a complex with 'GIGANTEA' (GI) to regulate 'CONSTANS' (CO) expression. Promotes CO expression during the light period of long days by decreasing the stability of CDF1 and CDF2 and by interacting directly with the CO protein and stabilizing it. ADO3 function is mainly GI dependent. Does not act as a regulator of CDF1 transcription. The interactions of ADO1/ZTL and ADO2 with ADO3 prevent its interaction with CDF1. This chain is Adagio protein 3 (ADO3), found in Arabidopsis thaliana (Mouse-ear cress).